Consider the following 176-residue polypeptide: NADH-quinone oxidoreductase subunit I 1 (176 aa).

4Fe-4S ferredoxin-type domains follow at residues 45 to 77 and 87 to 116; these read IVLT…MEAT and RWFR…MTPD. Residues Cys-57, Cys-60, Cys-63, Cys-67, Cys-96, Cys-99, Cys-102, and Cys-106 each coordinate [4Fe-4S] cluster.

It belongs to the complex I 23 kDa subunit family. NDH-1 is composed of 14 different subunits. Subunits NuoA, H, J, K, L, M, N constitute the membrane sector of the complex. [4Fe-4S] cluster serves as cofactor.

The protein localises to the cell inner membrane. It carries out the reaction a quinone + NADH + 5 H(+)(in) = a quinol + NAD(+) + 4 H(+)(out). NDH-1 shuttles electrons from NADH, via FMN and iron-sulfur (Fe-S) centers, to quinones in the respiratory chain. The immediate electron acceptor for the enzyme in this species is believed to be ubiquinone. Couples the redox reaction to proton translocation (for every two electrons transferred, four hydrogen ions are translocated across the cytoplasmic membrane), and thus conserves the redox energy in a proton gradient. This chain is NADH-quinone oxidoreductase subunit I 1, found in Geobacter metallireducens (strain ATCC 53774 / DSM 7210 / GS-15).